Reading from the N-terminus, the 77-residue chain is Small ribosomal subunit protein uS17c (77 aa).

This sequence belongs to the universal ribosomal protein uS17 family. As to quaternary structure, part of the 30S ribosomal subunit.

It is found in the plastid. Its subcellular location is the chloroplast. One of the primary rRNA binding proteins, it binds specifically to the 5'-end of 16S ribosomal RNA. This Cyanidium caldarium (Red alga) protein is Small ribosomal subunit protein uS17c (rps17).